The following is a 256-amino-acid chain: Trans-aconitate 2-methyltransferase (256 aa).

Belongs to the methyltransferase superfamily. Tam family.

It localises to the cytoplasm. It carries out the reaction trans-aconitate + S-adenosyl-L-methionine = (E)-3-(methoxycarbonyl)pent-2-enedioate + S-adenosyl-L-homocysteine. Catalyzes the S-adenosylmethionine monomethyl esterification of trans-aconitate. The chain is Trans-aconitate 2-methyltransferase from Rhodopseudomonas palustris (strain BisA53).